Consider the following 383-residue polypeptide: Ceramide synthase 3 (383 aa).

The helical transmembrane segment at 32–52 threads the bilayer; that stretch reads VFVKASHLYITIPYAFLLMVV. The tract at residues 66–127 is homeobox-like; the sequence is NALGIKKTQH…RIRQKQNKPC (62 aa). In terms of domain architecture, TLC spans 130–331; sequence QKFQESCWRF…ILKMLNRCIF (202 aa). Helical transmembrane passes span 139–159, 174–194, 205–225, 263–283, and 302–322; these read FTFYLLITMAGAVFLYDKPWA, LLPSQYWYYILEMSFYWSLVF, FLAHVIHHLAAISLMSFSWCA, LFFIFTVVFFISRFIIFPFWI, and IFLNLQLMILQGLHVYWGYFI. Residues 323 to 383 lie on the Cytoplasmic side of the membrane; sequence LKMLNRCIFT…HLIANGQHGR (61 aa). Ser340 is subject to Phosphoserine. Residues 340–383 are disordered; that stretch reads SDNEEEEEEEEEEEAESTKGKETEYLKNGLGTNRHLIANGQHGR. The segment covering 342–354 has biased composition (acidic residues); sequence NEEEEEEEEEEEA. Residues 355 to 364 show a composition bias toward basic and acidic residues; sequence ESTKGKETEY.

As to expression, predominantly expressed in testis. In skin, present in the upper stratum spinosum and stratum granulosum (at protein level).

Its subcellular location is the endoplasmic reticulum membrane. The enzyme catalyses a very long-chain fatty acyl-CoA + a sphingoid base = an N-(very-long-chain fatty acyl)-sphingoid base + CoA + H(+). It catalyses the reaction docosanoyl-CoA + sphinganine = N-docosanoylsphinganine + CoA + H(+). The catalysed reaction is tetracosanoyl-CoA + sphinganine = N-tetracosanoylsphinganine + CoA + H(+). It carries out the reaction hexacosanoyl-CoA + sphinganine = N-hexacosanoylsphinganine + CoA + H(+). The enzyme catalyses 2-hydroxydocosanoyl-CoA + sphinganine = N-(2-hydroxydocosanoyl)-sphinganine + CoA + H(+). It catalyses the reaction 2-hydroxytetracosanoyl-CoA + sphinganine = N-(2-hydroxytetracosanoyl)-sphinganine + CoA + H(+). The catalysed reaction is an ultra-long-chain fatty acyl-CoA + a sphingoid base = an N-(ultra-long-chain-acyl)-sphingoid base + CoA + H(+). It carries out the reaction octacosanoyl-CoA + sphinganine = N-(octacosanoyl)-sphinganine + CoA + H(+). The enzyme catalyses a fatty acyl-CoA + sphing-4-enine = an N-acylsphing-4-enine + CoA + H(+). It catalyses the reaction sphinganine + octadecanoyl-CoA = N-(octadecanoyl)-sphinganine + CoA + H(+). The catalysed reaction is 2-hydroxyoctadecanoyl-CoA + sphinganine = N-(2-hydroxyoctadecanoyl)-sphinganine + CoA + H(+). It participates in lipid metabolism; sphingolipid metabolism. Functionally, ceramide synthase that catalyzes the transfer of the acyl chain from acyl-CoA to a sphingoid base, with high selectivity toward very- and ultra-long-chain fatty acyl-CoA (chain length greater than C22). N-acylates sphinganine and sphingosine bases to form dihydroceramides and ceramides in de novo synthesis and salvage pathways, respectively. It is crucial for the synthesis of ultra-long-chain ceramides in the epidermis, to maintain epidermal lipid homeostasis and terminal differentiation. This chain is Ceramide synthase 3, found in Mus musculus (Mouse).